A 406-amino-acid chain; its full sequence is Argininosuccinate synthase (406 aa).

ATP-binding positions include 11-19 (AYSGGLDTS) and A38. L-citrulline contacts are provided by Y91 and S96. G121 lines the ATP pocket. Residues T123, N127, and D128 each coordinate L-aspartate. Residue N127 coordinates L-citrulline. Residues R131, S181, S190, E266, and Y278 each coordinate L-citrulline.

The protein belongs to the argininosuccinate synthase family. Type 1 subfamily. Homotetramer.

It localises to the cytoplasm. It catalyses the reaction L-citrulline + L-aspartate + ATP = 2-(N(omega)-L-arginino)succinate + AMP + diphosphate + H(+). It functions in the pathway amino-acid biosynthesis; L-arginine biosynthesis; L-arginine from L-ornithine and carbamoyl phosphate: step 2/3. This is Argininosuccinate synthase from Campylobacter jejuni subsp. jejuni serotype O:23/36 (strain 81-176).